The chain runs to 52 residues: uncharacterized protein (52 aa).

Positions 24 to 52 are disordered; that stretch reads LRENPSKNVRTIPDAGDENSSFGHARVIA.

This is an uncharacterized protein from Treponema pallidum (strain Nichols).